Here is a 520-residue protein sequence, read N- to C-terminus: ATP-dependent RNA helicase CshA (520 aa).

The Q motif motif lies at 2–30 (TKFSEFGLDEKIVKSVNRMGFEEATPIQE). The 171-residue stretch at 33 to 203 (IPLGLEGKDL…ERFMHSPELI (171 aa)) folds into the Helicase ATP-binding domain. 46–53 (AQTGTGKT) serves as a coordination point for ATP. A DEAD box motif is present at residues 151 to 154 (DEAD). Residues 214–374 (LIEQFFVKVH…PLQAPTWDEA (161 aa)) form the Helicase C-terminal domain. The span at 428-439 (KTPVHITEERPL) shows a compositional bias: basic and acidic residues. The tract at residues 428-520 (KTPVHITEER…NKGNYSQKSK (93 aa)) is disordered. 2 stretches are compositionally biased toward gly residues: residues 442–468 (RGGG…GKGG) and 482–496 (SGGG…GGGG).

The protein belongs to the DEAD box helicase family. CshA subfamily. Oligomerizes, may be a member of the RNA degradosome.

The protein localises to the cytoplasm. It carries out the reaction ATP + H2O = ADP + phosphate + H(+). DEAD-box RNA helicase possibly involved in RNA degradation. Unwinds dsRNA in both 5'- and 3'-directions, has RNA-dependent ATPase activity. Involved in cold tolerance, motility and alcohol tolerance. This is ATP-dependent RNA helicase CshA from Listeria monocytogenes serovar 1/2a (strain ATCC BAA-679 / EGD-e).